The primary structure comprises 139 residues: Putative truncated protein trichome birefringence-like 46 (139 aa).

This sequence belongs to the PC-esterase family. TBL subfamily.

In Arabidopsis thaliana (Mouse-ear cress), this protein is Putative truncated protein trichome birefringence-like 46 (TBL46).